A 143-amino-acid polypeptide reads, in one-letter code: Small ribosomal subunit protein uS12 (143 aa).

A compositionally biased stretch (basic residues) spans Met1–Gln20. Residues Met1–Lys28 form a disordered region. Pro62 carries the post-translational modification Hydroxyproline.

This sequence belongs to the universal ribosomal protein uS12 family. As to quaternary structure, component of the 40S small ribosomal subunit.

It localises to the cytoplasm. Its subcellular location is the cytosol. The protein resides in the rough endoplasmic reticulum. The polypeptide is Small ribosomal subunit protein uS12 (RPS23) (Lumbricus rubellus (Humus earthworm)).